A 379-amino-acid polypeptide reads, in one-letter code: cAMP-dependent protein kinase type I-alpha regulatory subunit (379 aa).

M1 carries the N-acetylmethionine modification. The dimerization and phosphorylation stretch occupies residues 1–134 (MASSSTSSEE…ALAKAIEKNV (134 aa)). A disordered region spans residues 63 to 93 (QMVSQQKSSSRSDSREDEVSPPMNPVVKGRR). A Pseudophosphorylation motif motif is present at residues 94–98 (RRGAI). 3',5'-cyclic AMP-binding positions include 135-252 (LFAH…SKVS), E200, R209, 253-379 (ILES…SLSV), E324, and R333.

The protein belongs to the cAMP-dependent kinase regulatory chain family. In terms of assembly, the inactive holoenzyme is composed of two regulatory chains and two catalytic chains. Activation by cAMP releases the two active catalytic monomers and the regulatory dimer. Interacts with PRKACA and PRKACB. Interacts with PRRC1; resulting in PKA activation. Post-translationally, the pseudophosphorylation site binds to the substrate-binding region of the catalytic chain, resulting in the inhibition of its activity.

The protein localises to the cell membrane. In terms of biological role, regulatory subunit of the cAMP-dependent protein kinases involved in cAMP signaling in cells. The protein is cAMP-dependent protein kinase type I-alpha regulatory subunit (prkar1aa) of Danio rerio (Zebrafish).